Here is a 119-residue protein sequence, read N- to C-terminus: Beta-2-microglobulin (119 aa).

A signal peptide spans 1 to 20 (MARSVVAALLVLLSLSGLEA). Positions 25-114 (PKIQVYSRHP…VTFPTPKTVK (90 aa)) constitute an Ig-like C1-type domain. An intrachain disulfide couples Cys-45 to Cys-100.

This sequence belongs to the beta-2-microglobulin family. Heterodimer of an alpha chain and a beta chain. Beta-2-microglobulin is the beta-chain of major histocompatibility complex class I molecules.

It is found in the secreted. In terms of biological role, component of the class I major histocompatibility complex (MHC). Involved in the presentation of peptide antigens to the immune system. The chain is Beta-2-microglobulin (B2M) from Saimiri boliviensis boliviensis (Bolivian squirrel monkey).